A 217-amino-acid chain; its full sequence is Small ribosomal subunit protein eS6 (217 aa).

It belongs to the eukaryotic ribosomal protein eS6 family.

The chain is Small ribosomal subunit protein eS6 from Hyperthermus butylicus (strain DSM 5456 / JCM 9403 / PLM1-5).